The following is an 841-amino-acid chain: DNA ligase (841 aa).

NAD(+)-binding positions include 33-37 (DAQYD), 82-83 (SL), and glutamate 114. Lysine 116 acts as the N6-AMP-lysine intermediate in catalysis. NAD(+) is bound by residues arginine 137, glutamate 174, lysine 300, and lysine 324. Cysteine 418, cysteine 421, cysteine 436, and cysteine 442 together coordinate Zn(2+). The region spanning 758–841 (EKTGPLDGQT…AFLGEHGQQR (84 aa)) is the BRCT domain.

The protein belongs to the NAD-dependent DNA ligase family. LigA subfamily. The cofactor is Mg(2+). Mn(2+) serves as cofactor.

The catalysed reaction is NAD(+) + (deoxyribonucleotide)n-3'-hydroxyl + 5'-phospho-(deoxyribonucleotide)m = (deoxyribonucleotide)n+m + AMP + beta-nicotinamide D-nucleotide.. DNA ligase that catalyzes the formation of phosphodiester linkages between 5'-phosphoryl and 3'-hydroxyl groups in double-stranded DNA using NAD as a coenzyme and as the energy source for the reaction. It is essential for DNA replication and repair of damaged DNA. The polypeptide is DNA ligase (Xanthomonas oryzae pv. oryzae (strain KACC10331 / KXO85)).